A 66-amino-acid chain; its full sequence is Large ribosomal subunit protein bL33 (66 aa).

This sequence belongs to the bacterial ribosomal protein bL33 family.

The protein is Large ribosomal subunit protein bL33 of Wolbachia pipientis subsp. Culex pipiens (strain wPip).